The sequence spans 134 residues: MAVNARLISKSYLSMFALPGYDAFLGFLLVSAAVPILALVTNKLLAPRSRTGERELTYESGMEPIGGAWIQFNIRYYMFALVFVIFDVETVFLYPWAVAFHRLGLLAFIEALIFIAILLVALAYAWRKGALEWS.

A run of 3 helical transmembrane segments spans residues 20 to 40 (GYDAFLGFLLVSAAVPILALV), 78 to 98 (MFALVFVIFDVETVFLYPWAV), and 103 to 123 (LGLLAFIEALIFIAILLVALA).

This sequence belongs to the complex I subunit 3 family. As to quaternary structure, NDH-1 can be composed of about 15 different subunits; different subcomplexes with different compositions have been identified which probably have different functions.

It localises to the cellular thylakoid membrane. The catalysed reaction is a plastoquinone + NADH + (n+1) H(+)(in) = a plastoquinol + NAD(+) + n H(+)(out). It carries out the reaction a plastoquinone + NADPH + (n+1) H(+)(in) = a plastoquinol + NADP(+) + n H(+)(out). Functionally, NDH-1 shuttles electrons from an unknown electron donor, via FMN and iron-sulfur (Fe-S) centers, to quinones in the respiratory and/or the photosynthetic chain. The immediate electron acceptor for the enzyme in this species is believed to be plastoquinone. Couples the redox reaction to proton translocation, and thus conserves the redox energy in a proton gradient. Cyanobacterial NDH-1 also plays a role in inorganic carbon-concentration. This is NAD(P)H-quinone oxidoreductase subunit 3 from Prochlorococcus marinus (strain MIT 9303).